Consider the following 971-residue polypeptide: E3 ubiquitin-protein ligase MIB2 (971 aa).

Positions 1–80 (MDLDPHAGVQ…AHDLLLYDNA (80 aa)) constitute an MIB/HERC2 1 domain. The ZZ-type zinc-finger motif lies at 86 to 138 (HPNIICDCCKKHGLRGMRWKCRVCFDYDLCTQCYMHNKHDLTHAFERYETSHS). Zn(2+) contacts are provided by Cys91, Cys94, Cys106, Cys109, Cys115, Cys118, His124, and His128. Positions 149–227 (LPRIPLRGIF…KVDLKCVGEA (79 aa)) constitute an MIB/HERC2 2 domain. Residue Ser251 is modified to Phosphoserine. 9 ANK repeats span residues 478–507 (QGRTALQVAAYLGQVELVRLLLQARASVDL), 511–540 (EGNTALHYTAMGNQPEATRLLLSAGCGVDA), 544–573 (TRSTALHVAVQRGFLEVVKILCEHGCDVNL), 577–609 (HADTPLHSAISAGAGASSIVEVLTEVPGIDVTA), 613–642 (QGFTLLHHASLKGHVLAVRKILARARQLVD), 647–677 (DGFTALHLAALNNHREVAQVLIREGRCDVNV), 681–710 (KLQSPLHLAVQQAHLGLVPLLVDAGCNVNT), 714–742 (EGDTALHVALQRHQLLPLVADRAGGDPGP), and 783–812 (RGRSPLDLATEGRVLKALQGCAQRFRERQA). 2 RING-type zinc fingers span residues 848-883 (CLVCSELALLVLFSPCQHRTVCEECARRMKKCIRCQ) and 927-960 (CPICIDSHIRLVFQCGHGACAPCGAALNACPICR).

In terms of assembly, interacts with actin monomer. Post-translationally, ubiquitinated. Possibly via autoubiquitination.

The protein resides in the cytoplasm. It is found in the endosome. It catalyses the reaction S-ubiquitinyl-[E2 ubiquitin-conjugating enzyme]-L-cysteine + [acceptor protein]-L-lysine = [E2 ubiquitin-conjugating enzyme]-L-cysteine + N(6)-ubiquitinyl-[acceptor protein]-L-lysine.. Its pathway is protein modification; protein ubiquitination. In terms of biological role, E3 ubiquitin-protein ligase that mediates ubiquitination of Delta receptors, which act as ligands of Notch proteins. Positively regulates the Delta-mediated Notch signaling by ubiquitinating the intracellular domain of Delta, leading to endocytosis of Delta receptors. The sequence is that of E3 ubiquitin-protein ligase MIB2 (Mib2) from Rattus norvegicus (Rat).